Here is a 337-residue protein sequence, read N- to C-terminus: Ketol-acid reductoisomerase (NADP(+)) (337 aa).

The KARI N-terminal Rossmann domain occupies 1–180 (MQVYYDKDAD…GGTKGGVIET (180 aa)). NADP(+) contacts are provided by residues 24–27 (YGSQ), R47, and S51. The active site involves H106. G132 serves as a coordination point for NADP(+). One can recognise a KARI C-terminal knotted domain in the interval 181-326 (TFREETETDL…AQLRAMMPWI (146 aa)). Residues D189, E193, E225, and E229 each coordinate Mg(2+). Residue S250 participates in substrate binding.

The protein belongs to the ketol-acid reductoisomerase family. Mg(2+) is required as a cofactor.

The enzyme catalyses (2R)-2,3-dihydroxy-3-methylbutanoate + NADP(+) = (2S)-2-acetolactate + NADPH + H(+). It carries out the reaction (2R,3R)-2,3-dihydroxy-3-methylpentanoate + NADP(+) = (S)-2-ethyl-2-hydroxy-3-oxobutanoate + NADPH + H(+). It participates in amino-acid biosynthesis; L-isoleucine biosynthesis; L-isoleucine from 2-oxobutanoate: step 2/4. Its pathway is amino-acid biosynthesis; L-valine biosynthesis; L-valine from pyruvate: step 2/4. In terms of biological role, involved in the biosynthesis of branched-chain amino acids (BCAA). Catalyzes an alkyl-migration followed by a ketol-acid reduction of (S)-2-acetolactate (S2AL) to yield (R)-2,3-dihydroxy-isovalerate. In the isomerase reaction, S2AL is rearranged via a Mg-dependent methyl migration to produce 3-hydroxy-3-methyl-2-ketobutyrate (HMKB). In the reductase reaction, this 2-ketoacid undergoes a metal-dependent reduction by NADPH to yield (R)-2,3-dihydroxy-isovalerate. This Neisseria meningitidis serogroup C (strain 053442) protein is Ketol-acid reductoisomerase (NADP(+)).